The chain runs to 125 residues: SOSS complex subunit C homolog B (125 aa).

Disordered stretches follow at residues 44–73 (PAPQ…RAAF) and 105–125 (PATP…NNPK).

Belongs to the SOSS-C family.

The polypeptide is SOSS complex subunit C homolog B (Drosophila willistoni (Fruit fly)).